The primary structure comprises 427 residues: Trigger factor (427 aa).

The PPIase FKBP-type domain occupies 160–240 (GDTLIGDVTK…VKEVKRLELP (81 aa)).

It belongs to the FKBP-type PPIase family. Tig subfamily.

It is found in the cytoplasm. It catalyses the reaction [protein]-peptidylproline (omega=180) = [protein]-peptidylproline (omega=0). Involved in protein export. Acts as a chaperone by maintaining the newly synthesized protein in an open conformation. Functions as a peptidyl-prolyl cis-trans isomerase. This is Trigger factor from Chlorobaculum parvum (strain DSM 263 / NCIMB 8327) (Chlorobium vibrioforme subsp. thiosulfatophilum).